Here is a 374-residue protein sequence, read N- to C-terminus: UDP-N-acetylglucosamine--N-acetylmuramyl-(pentapeptide) pyrophosphoryl-undecaprenol N-acetylglucosamine transferase (374 aa).

Residues 13 to 15 (TGG), Asn-124, Arg-165, Ser-193, and Gln-294 contribute to the UDP-N-acetyl-alpha-D-glucosamine site.

It belongs to the glycosyltransferase 28 family. MurG subfamily.

It is found in the cell inner membrane. It catalyses the reaction di-trans,octa-cis-undecaprenyl diphospho-N-acetyl-alpha-D-muramoyl-L-alanyl-D-glutamyl-meso-2,6-diaminopimeloyl-D-alanyl-D-alanine + UDP-N-acetyl-alpha-D-glucosamine = di-trans,octa-cis-undecaprenyl diphospho-[N-acetyl-alpha-D-glucosaminyl-(1-&gt;4)]-N-acetyl-alpha-D-muramoyl-L-alanyl-D-glutamyl-meso-2,6-diaminopimeloyl-D-alanyl-D-alanine + UDP + H(+). It participates in cell wall biogenesis; peptidoglycan biosynthesis. Its function is as follows. Cell wall formation. Catalyzes the transfer of a GlcNAc subunit on undecaprenyl-pyrophosphoryl-MurNAc-pentapeptide (lipid intermediate I) to form undecaprenyl-pyrophosphoryl-MurNAc-(pentapeptide)GlcNAc (lipid intermediate II). The sequence is that of UDP-N-acetylglucosamine--N-acetylmuramyl-(pentapeptide) pyrophosphoryl-undecaprenol N-acetylglucosamine transferase from Rhizobium johnstonii (strain DSM 114642 / LMG 32736 / 3841) (Rhizobium leguminosarum bv. viciae).